Consider the following 436-residue polypeptide: 3-ketoacyl-CoA thiolase (436 aa).

Residue cysteine 99 is the Acyl-thioester intermediate of the active site. Residues histidine 392 and cysteine 422 each act as proton acceptor in the active site.

It belongs to the thiolase-like superfamily. Thiolase family. As to quaternary structure, heterotetramer of two alpha chains (FadJ) and two beta chains (FadI).

It localises to the cytoplasm. The catalysed reaction is an acyl-CoA + acetyl-CoA = a 3-oxoacyl-CoA + CoA. It functions in the pathway lipid metabolism; fatty acid beta-oxidation. In terms of biological role, catalyzes the final step of fatty acid oxidation in which acetyl-CoA is released and the CoA ester of a fatty acid two carbons shorter is formed. The sequence is that of 3-ketoacyl-CoA thiolase from Salmonella typhimurium (strain LT2 / SGSC1412 / ATCC 700720).